A 123-amino-acid chain; its full sequence is Ribonuclease P protein component (123 aa).

Belongs to the RnpA family. Consists of a catalytic RNA component (M1 or rnpB) and a protein subunit.

The catalysed reaction is Endonucleolytic cleavage of RNA, removing 5'-extranucleotides from tRNA precursor.. RNaseP catalyzes the removal of the 5'-leader sequence from pre-tRNA to produce the mature 5'-terminus. It can also cleave other RNA substrates such as 4.5S RNA. The protein component plays an auxiliary but essential role in vivo by binding to the 5'-leader sequence and broadening the substrate specificity of the ribozyme. The sequence is that of Ribonuclease P protein component from Streptomyces bikiniensis.